Here is a 465-residue protein sequence, read N- to C-terminus: Trigger factor (465 aa).

One can recognise a PPIase FKBP-type domain in the interval 163–248; that stretch reads GDVINFNFKG…INKIKENQPA (86 aa). The segment at 431-465 is disordered; the sequence is EIVNKNQNDNEIEQDKEQKDNNEEKIKQENNLENK. The span at 443–465 shows a compositional bias: basic and acidic residues; sequence EQDKEQKDNNEEKIKQENNLENK.

This sequence belongs to the FKBP-type PPIase family. Tig subfamily.

It is found in the cytoplasm. It catalyses the reaction [protein]-peptidylproline (omega=180) = [protein]-peptidylproline (omega=0). Functionally, involved in protein export. Acts as a chaperone by maintaining the newly synthesized protein in an open conformation. Functions as a peptidyl-prolyl cis-trans isomerase. The sequence is that of Trigger factor from Mesomycoplasma hyopneumoniae (strain J / ATCC 25934 / NCTC 10110) (Mycoplasma hyopneumoniae).